A 120-amino-acid polypeptide reads, in one-letter code: Putative pterin-4-alpha-carbinolamine dehydratase (120 aa).

The protein belongs to the pterin-4-alpha-carbinolamine dehydratase family.

The catalysed reaction is (4aS,6R)-4a-hydroxy-L-erythro-5,6,7,8-tetrahydrobiopterin = (6R)-L-erythro-6,7-dihydrobiopterin + H2O. The protein is Putative pterin-4-alpha-carbinolamine dehydratase of Saccharomyces cerevisiae (strain ATCC 204508 / S288c) (Baker's yeast).